The primary structure comprises 59 residues: Large ribosomal subunit protein uL30 (59 aa).

Belongs to the universal ribosomal protein uL30 family. As to quaternary structure, part of the 50S ribosomal subunit.

The chain is Large ribosomal subunit protein uL30 from Histophilus somni (strain 129Pt) (Haemophilus somnus).